We begin with the raw amino-acid sequence, 375 residues long: MYLEHLHLHSFRNYAEQVLKFESKKTILLGNNAQGKSNLLEAIELLATLKSHRVSKDRDLVLESDSEARIFARVNRLYGASELSLILRSSGRRTVIRDRQPLRRHLDFLGVINAVQFSSLDLDLVRGGPEARRDWLDTLLIQLEPLYVHILQQYNQVLRQRNALLKEIRKQELEGKVYGDLSQLKLWDLQLAETGSRVTRRRARVLQRLIPLAQKWHESISGKTELLELQYIPNVPWVEDDVNGVQRAFLDKIETRRLAEKQLGTSVVGPHRDEVDFLINQNPAKSYGSQGQQRTLVLALKLAELQLLEQIIGEPPLLLLDDVLAELDIERQNQLLDAIEDRFQTLITTTHLSSFESRWLQSSQVFSVKKGHIFY.

Residue 30–37 (GNNAQGKS) coordinates ATP.

Belongs to the RecF family.

It localises to the cytoplasm. In terms of biological role, the RecF protein is involved in DNA metabolism; it is required for DNA replication and normal SOS inducibility. RecF binds preferentially to single-stranded, linear DNA. It also seems to bind ATP. The protein is DNA replication and repair protein RecF of Microcystis aeruginosa (strain NIES-843 / IAM M-2473).